The following is a 388-amino-acid chain: Chorismate synthase (388 aa).

2 residues coordinate NADP(+): arginine 39 and arginine 45. FMN is bound by residues 130–132, 251–252, glycine 296, 311–315, and arginine 337; these read RSS, NA, and KPIPT.

The protein belongs to the chorismate synthase family. Homotetramer. The cofactor is FMNH2.

It carries out the reaction 5-O-(1-carboxyvinyl)-3-phosphoshikimate = chorismate + phosphate. It participates in metabolic intermediate biosynthesis; chorismate biosynthesis; chorismate from D-erythrose 4-phosphate and phosphoenolpyruvate: step 7/7. Functionally, catalyzes the anti-1,4-elimination of the C-3 phosphate and the C-6 proR hydrogen from 5-enolpyruvylshikimate-3-phosphate (EPSP) to yield chorismate, which is the branch point compound that serves as the starting substrate for the three terminal pathways of aromatic amino acid biosynthesis. This reaction introduces a second double bond into the aromatic ring system. This is Chorismate synthase from Streptococcus pyogenes serotype M12 (strain MGAS2096).